A 222-amino-acid chain; its full sequence is UPF0316 protein Mboo_0791 (222 aa).

A run of 3 helical transmembrane segments spans residues 25–45, 67–87, and 93–113; these read FFLF…IFLA, LAPV…VGVL, and IAYF…GLVI.

It belongs to the UPF0316 family.

Its subcellular location is the cell membrane. The polypeptide is UPF0316 protein Mboo_0791 (Methanoregula boonei (strain DSM 21154 / JCM 14090 / 6A8)).